We begin with the raw amino-acid sequence, 218 residues long: uncharacterized protein (218 aa).

A run of 4 helical transmembrane segments spans residues 10-30, 55-75, 147-167, and 175-195; these read IPPL…SLGI, IGVG…GYSI, VTGG…AGMA, and FSWI…ILLR.

This sequence belongs to the DedA family.

The protein localises to the cell membrane. This is an uncharacterized protein from Mycobacterium tuberculosis (strain CDC 1551 / Oshkosh).